The sequence spans 624 residues: 1-deoxy-D-xylulose-5-phosphate synthase (624 aa).

Thiamine diphosphate is bound by residues His-74 and 115–117 (GHS). Residue Asp-146 participates in Mg(2+) binding. Thiamine diphosphate is bound by residues 147–148 (GA), Asn-175, Tyr-286, and Glu-366. Asn-175 serves as a coordination point for Mg(2+).

The protein belongs to the transketolase family. DXPS subfamily. In terms of assembly, homodimer. Requires Mg(2+) as cofactor. It depends on thiamine diphosphate as a cofactor.

It catalyses the reaction D-glyceraldehyde 3-phosphate + pyruvate + H(+) = 1-deoxy-D-xylulose 5-phosphate + CO2. Its pathway is metabolic intermediate biosynthesis; 1-deoxy-D-xylulose 5-phosphate biosynthesis; 1-deoxy-D-xylulose 5-phosphate from D-glyceraldehyde 3-phosphate and pyruvate: step 1/1. Catalyzes the acyloin condensation reaction between C atoms 2 and 3 of pyruvate and glyceraldehyde 3-phosphate to yield 1-deoxy-D-xylulose-5-phosphate (DXP). This chain is 1-deoxy-D-xylulose-5-phosphate synthase, found in Clostridium kluyveri (strain NBRC 12016).